We begin with the raw amino-acid sequence, 269 residues long: 4-hydroxy-tetrahydrodipicolinate reductase (269 aa).

NAD(+) is bound by residues 11–16 (GGSGRM) and E37. Position 38 (R38) interacts with NADP(+). NAD(+)-binding positions include 101–103 (GTT) and 125–128 (AGNM). The active-site Proton donor/acceptor is the H158. Residue H159 coordinates (S)-2,3,4,5-tetrahydrodipicolinate. K162 (proton donor) is an active-site residue. 168–169 (GT) contributes to the (S)-2,3,4,5-tetrahydrodipicolinate binding site.

This sequence belongs to the DapB family.

The protein resides in the cytoplasm. It carries out the reaction (S)-2,3,4,5-tetrahydrodipicolinate + NAD(+) + H2O = (2S,4S)-4-hydroxy-2,3,4,5-tetrahydrodipicolinate + NADH + H(+). The enzyme catalyses (S)-2,3,4,5-tetrahydrodipicolinate + NADP(+) + H2O = (2S,4S)-4-hydroxy-2,3,4,5-tetrahydrodipicolinate + NADPH + H(+). The protein operates within amino-acid biosynthesis; L-lysine biosynthesis via DAP pathway; (S)-tetrahydrodipicolinate from L-aspartate: step 4/4. In terms of biological role, catalyzes the conversion of 4-hydroxy-tetrahydrodipicolinate (HTPA) to tetrahydrodipicolinate. This is 4-hydroxy-tetrahydrodipicolinate reductase from Dinoroseobacter shibae (strain DSM 16493 / NCIMB 14021 / DFL 12).